A 600-amino-acid polypeptide reads, in one-letter code: Probable tripeptidyl-peptidase SED4 (600 aa).

An N-terminal signal peptide occupies residues Met1 to Ala22. Residues Ala23–Thr202 constitute a propeptide, removed in mature form. 2 N-linked (GlcNAc...) asparagine glycosylation sites follow: Asn210 and Asn281. A Peptidase S53 domain is found at Thr212–Ile600. Residues Glu288 and Asp292 each act as charge relay system in the active site. Residues Asn323 and Asn404 are each glycosylated (N-linked (GlcNAc...) asparagine). Catalysis depends on Ser504, which acts as the Charge relay system. The Ca(2+) site is built by Asp546 and Ile547. N-linked (GlcNAc...) asparagine glycosylation is present at Asn575. Ca(2+)-binding residues include Gly579 and Asp581.

It depends on Ca(2+) as a cofactor.

It localises to the secreted. Its subcellular location is the extracellular space. The catalysed reaction is Release of an N-terminal tripeptide from a polypeptide.. Its function is as follows. Secreted tripeptidyl-peptidase which degrades proteins at acidic pHs and is involved in virulence. This chain is Probable tripeptidyl-peptidase SED4 (SED4), found in Arthroderma benhamiae (strain ATCC MYA-4681 / CBS 112371) (Trichophyton mentagrophytes).